We begin with the raw amino-acid sequence, 549 residues long: Chaperonin GroEL (549 aa).

Residues 29–32 (TLGP), K50, 86–90 (DGTTT), G413, 479–481 (NAA), and D496 contribute to the ATP site. The segment at 522–549 (VSDKPEKPQQGGQGGGGMGGGDMGGMDF) is disordered. Residues 532–549 (GGQGGGGMGGGDMGGMDF) show a composition bias toward gly residues.

Belongs to the chaperonin (HSP60) family. As to quaternary structure, forms a cylinder of 14 subunits composed of two heptameric rings stacked back-to-back. Interacts with the co-chaperonin GroES.

Its subcellular location is the cytoplasm. The enzyme catalyses ATP + H2O + a folded polypeptide = ADP + phosphate + an unfolded polypeptide.. In terms of biological role, together with its co-chaperonin GroES, plays an essential role in assisting protein folding. The GroEL-GroES system forms a nano-cage that allows encapsulation of the non-native substrate proteins and provides a physical environment optimized to promote and accelerate protein folding. In Deinococcus deserti (strain DSM 17065 / CIP 109153 / LMG 22923 / VCD115), this protein is Chaperonin GroEL.